The following is a 518-amino-acid chain: Cyclin-L2 (518 aa).

2 cyclin-like regions span residues 81–183 and 196–280; these read ELIQ…RVLK and KIIV…KILQ. A disordered region spans residues 310–518; that stretch reads AKGLLPGTAP…DHPGHSRHRR (209 aa). Phosphoserine is present on residues Ser328, Ser335, Ser345, Ser348, and Ser366. Positions 382–420 are RS; that stretch reads RSREQSYSRSPSRSASPKRRKSDSGSTSGGSKSQSRSRS. Over residues 405-427 the composition is skewed to low complexity; the sequence is SGSTSGGSKSQSRSRSRSDSPPR. The span at 438-450 shows a compositional bias: basic and acidic residues; sequence SEVRGSRKSKDCK. Over residues 455-469 the composition is skewed to basic residues; that stretch reads KPHKSRSRSSSRSRS. Composition is skewed to basic and acidic residues over residues 470–479 and 487–512; these read RSRERTDNSG and YYRD…DHPG.

This sequence belongs to the cyclin family. Cyclin L subfamily. In terms of assembly, interacts with CDK11A, CDK11B, CDK12, CDK13 and POLR2A, the hyperphosphorylated C-terminal domain (CTD) of RNA polymerase II. May form a ternary complex with CDK11B and casein kinase II (CKII). Interacts with pre-mRNA-splicing factors, including at least SRSF1, SRSF2 and SRSF7/SLU7. In terms of tissue distribution, widely expressed (at protein level).

The protein localises to the nucleus speckle. The protein resides in the nucleus. It is found in the nucleoplasm. Functionally, involved in pre-mRNA splicing. May induce cell death, possibly by acting on the transcription and RNA processing of apoptosis-related factors. This chain is Cyclin-L2 (Ccnl2), found in Mus musculus (Mouse).